Consider the following 312-residue polypeptide: Putative ring-cleaving dioxygenase MhqO (312 aa).

2 VOC domains span residues 7 to 131 (GIHH…IVER) and 152 to 269 (GFGG…IATD). Fe cation contacts are provided by H10, H217, and E265.

The protein belongs to the extradiol ring-cleavage dioxygenase family. Fe(2+) serves as cofactor.

Its subcellular location is the cytoplasm. In terms of biological role, putative ring-cleavage dioxygenase that may contribute to the degradation of aromatic compounds. This Bacillus subtilis (strain 168) protein is Putative ring-cleaving dioxygenase MhqO (mhqO).